We begin with the raw amino-acid sequence, 405 residues long: Nuclear hormone receptor family member nhr-199 (405 aa).

Positions 20–111 form a DNA-binding region, nuclear receptor; that stretch reads IPYCLICSEV…MGMQRSSVQQ (92 aa). 2 NR C4-type zinc fingers span residues 23-44 and 60-94; these read CLICSEVADGNHFGVAAACRAC and CGRNGQCFFLSCKFLLVGFQISPLSSDARSMCKAC. Residues 126–376 enclose the NR LBD domain; the sequence is RGKPVLNKLR…PFSRIHGNQK (251 aa).

This sequence belongs to the nuclear hormone receptor family.

It is found in the nucleus. Its function is as follows. Orphan nuclear receptor. The chain is Nuclear hormone receptor family member nhr-199 (nhr-199) from Caenorhabditis elegans.